We begin with the raw amino-acid sequence, 2362 residues long: Filaggrin-2 (2362 aa).

Residues 1–81 form an S-100-like region; the sequence is MAYLLRSVVT…TEFILMIFKL (81 aa). EF-hand domains follow at residues 8 to 43 and 49 to 84; these read VVTI…EFRP and DDPD…LALA. Residues D62, D64, D66, R68, and E73 each contribute to the Ca(2+) site. Disordered regions lie at residues 96 to 238 and 284 to 2109; these read ASGS…GLSC and GCCR…SSIP. Acidic residues predominate over residues 111–120; sequence EESETEEEEE. Composition is skewed to basic and acidic residues over residues 159–174 and 189–214; these read KRLE…EESR and NKEK…PSRE. Filaggrin repeat units lie at residues 261–308 and 373–414; these read GYNT…NQSC and HSSC…SNGF. Polar residues-rich tracts occupy residues 284–317, 342–375, and 383–395; these read GCCR…CQSG, SCSQ…SHSS, and GATQ…QQRM. Residues 396–411 show a composition bias toward low complexity; the sequence is SSCGHSSSSHQKGCSS. Composition is skewed to polar residues over residues 421–443 and 450–469; these read ASGS…SSGF and SGQS…SGYS. Low complexity-rich tracts occupy residues 474–519, 539–550, and 567–580; these read GSGQ…QSSG, GSRQSSGSEQHG, and SQSS…SGSQ. A Filaggrin 3 repeat occupies 555–607; the sequence is QSSGSGKHETGPSQSSSSGHHGSGSQQHGGGSGQSTGFGEHESSSGHSSSSGQ. The segment covering 581-590 has biased composition (gly residues); sequence QHGGGSGQST. Over residues 599–618 the composition is skewed to low complexity; that stretch reads SGHSSSSGQHRSGSRHSSGS. The span at 632-653 shows a compositional bias: gly residues; it reads GHHGSGSQQHGGGSGNSTGFGE. Residues 654–675 show a composition bias toward low complexity; the sequence is HGSSSHPLPSSGQNESSSGQSS. Residues 672-723 form a Filaggrin 4 repeat; it reads GQSSRSERHGTGSGQSSGFGQHGSGSHQSSSSGHNEYGSGQTSSSWPHGKGS. Over residues 682–694 the composition is skewed to gly residues; it reads TGSGQSSGFGQHG. 3 stretches are compositionally biased toward low complexity: residues 695–705, 728–754, and 780–798; these read SGSHQSSSSGH, GYGE…QSSS, and GYGE…WQHG. Residues 826–838 are compositionally biased toward gly residues; the sequence is TGSGQSLGFGQHG. Positions 846 to 864 are enriched in low complexity; sequence SSGHYESVSEPSSSSWQHG. A Filaggrin 5 repeat occupies 880-927; sequence HGQSSSAWNHGNESGQSNGYGEHESGHGQSSSAWNHGNESGQSNGFGE. Polar residues-rich tracts occupy residues 886–896 and 912–925; these read AWNHGNESGQS and AWNH…SNGF. Positions 973 to 982 are enriched in basic and acidic residues; it reads ESSEGEEHSV. The Filaggrin 6 repeat unit spans residues 984–1035; the sequence is PRRYSGYGHGQGQAGHQQRESGYGQRGRPQGPSQDSSRQPQAGHGQPSQSGY. Residues 1014 to 1035 are compositionally biased toward polar residues; that stretch reads GPSQDSSRQPQAGHGQPSQSGY. Residues 1047 to 1059 show a composition bias toward basic and acidic residues; it reads EYSEGEAHSEVSQ. Residues 1067-1077 are compositionally biased toward basic residues; it reads CHCHCHGQARH. The segment covering 1104–1121 has biased composition (low complexity); the sequence is GPGQPSQSGSRRSPRSQP. A compositionally biased stretch (gly residues) spans 1142–1152; it reads SGHGHGQGQGQ. A compositionally biased stretch (polar residues) spans 1162-1174; that stretch reads HGQQGRPQGPSQD. One copy of the Filaggrin 7 repeat lies at 1165–1210; that stretch reads QGRPQGPSQDSSRQPQAGQGQPSQSGSGRSPRRSPVHPESSEGEEH. The segment covering 1175–1193 has biased composition (low complexity); sequence SSRQPQAGQGQPSQSGSGR. S1198, S1204, and S1205 each carry phosphoserine. Residues 1220 to 1232 are compositionally biased toward gly residues; sequence SGHGHGQGQGQGQ. Residues 1255 to 1273 are compositionally biased toward low complexity; the sequence is SSRQPQAGQGQPSQSGSGR. A phosphoserine mark is found at S1278, S1284, and S1285. A Filaggrin 8 repeat occupies 1280 to 1334; the sequence is VHPESSEGEEHSVVPQRHSGSGHGHGQGQGQAGHQQRESVHGQPVRPEVPTQDSS. A compositionally biased stretch (gly residues) spans 1300–1310; it reads SGHGHGQGQGQ. The span at 1333 to 1351 shows a compositional bias: low complexity; that stretch reads SSRQPQAGQGQPSQSGSGR. Residues S1356, S1362, and S1363 each carry the phosphoserine modification. Basic and acidic residues predominate over residues 1377-1396; sequence ESCHCHCHDQAGHQQRESVH. Over residues 1413–1436 the composition is skewed to low complexity; that stretch reads PQAGPGQPSQSGSRRSPRSSPVHP. A phosphoserine mark is found at S1438 and S1439. Gly residues predominate over residues 1454 to 1464; that stretch reads SGHGHGQGQGQ. A Filaggrin 9 repeat occupies 1474 to 1522; that stretch reads HGQRGRPQGPTQDSSRQPQAGQGQPSQSGSGRSPRRSPVHPESSEGEEH. Residues 1487 to 1505 are compositionally biased toward low complexity; that stretch reads SSRQPQAGQGQPSQSGSGR. Phosphoserine occurs at positions 1510, 1516, and 1517. The span at 1532 to 1544 shows a compositional bias: gly residues; it reads SGHGHGHGQGQGQ. Residues 1567–1585 show a composition bias toward low complexity; sequence SSRQPQAGQGQPSQSGSGR. Phosphoserine is present on residues S1590, S1596, and S1597. Composition is skewed to low complexity over residues 1643–1661 and 1683–1696; these read SSRQ…GSGR and QRHS…GQGQ. The segment covering 1698-1708 has biased composition (basic and acidic residues); that stretch reads HAEHQQRESVH. One copy of the Filaggrin 10 repeat lies at 1723 to 1756; it reads RQPQAGQGQPSLSGSGRSPRRSPVHPESSEGEEH. Positions 1724 to 1739 are enriched in low complexity; that stretch reads QPQAGQGQPSLSGSGR. 6 positions are modified to phosphoserine: S1744, S1750, S1751, S1824, S1830, and S1831. Residues 1801-1825 are compositionally biased toward low complexity; that stretch reads SSRQPQAGQGQPSQSGSGRSPGRSP. Positions 1829 to 1848 are enriched in basic and acidic residues; that stretch reads ESSEGEEHSVVPQRHSESGH. The segment covering 1879-1897 has biased composition (low complexity); the sequence is SSRQPQAGQGQPSQSGSGR. A phosphoserine mark is found at S1902, S1908, and S1909. Positions 1924-1934 are enriched in gly residues; sequence SGHGHGQGQGQ. The segment covering 1949–1975 has biased composition (low complexity); sequence RPQGPSQDSSSQPQASQGQPSQSGSGR. Residues S1980, S1986, and S1987 each carry the phosphoserine modification. Gly residues predominate over residues 2002–2012; it reads SGHGHGQGQGQ. The stretch at 2016 to 2070 is one Filaggrin 11 repeat; the sequence is QQRESLHGQRGRSQSPFHPSHSIHWQSKCTISKKSSRLSGHYGRNHFQSTISGNQ. 3 stretches are compositionally biased toward polar residues: residues 2026-2048, 2061-2079, and 2100-2109; these read GRSQ…TISK, HFQS…SSRH, and LRSNSQSSIP. S2104 carries the post-translational modification Phosphoserine. The stretch at 2218-2259 is one Filaggrin 12 repeat; it reads DDSQYILFQKHLESPSFGNQSGFSPNERQLYTCNESIDSYHL.

This sequence belongs to the S100-fused protein family. In the N-terminal section; belongs to the S-100 family. Post-translationally, deiminated by PADI1, PADI2 or PADI3 in vitro. The deiminated form is degraded by calpain-1/CAPN1 more quickly and into shorter peptides than the intact protein. In terms of processing, may be processed by calpain-1/CAPN1.

The protein resides in the cytoplasm. It localises to the cytoplasmic granule. In terms of biological role, essential for normal cell-cell adhesion in the cornified cell layers. Important for proper integrity and mechanical strength of the stratum corneum of the epidermis. This is Filaggrin-2 (Flg2) from Mus musculus (Mouse).